Consider the following 160-residue polypeptide: Putative 4-hydroxy-4-methyl-2-oxoglutarate aldolase (160 aa).

Substrate contacts are provided by residues 75–78 (GDQL) and Arg-97. Residue Asp-98 coordinates a divalent metal cation.

Belongs to the class II aldolase/RraA-like family. As to quaternary structure, homotrimer. A divalent metal cation is required as a cofactor.

The catalysed reaction is 4-hydroxy-4-methyl-2-oxoglutarate = 2 pyruvate. The enzyme catalyses oxaloacetate + H(+) = pyruvate + CO2. Catalyzes the aldol cleavage of 4-hydroxy-4-methyl-2-oxoglutarate (HMG) into 2 molecules of pyruvate. Also contains a secondary oxaloacetate (OAA) decarboxylase activity due to the common pyruvate enolate transition state formed following C-C bond cleavage in the retro-aldol and decarboxylation reactions. This Vibrio vulnificus (strain YJ016) protein is Putative 4-hydroxy-4-methyl-2-oxoglutarate aldolase.